The following is a 162-amino-acid chain: 2-C-methyl-D-erythritol 2,4-cyclodiphosphate synthase (162 aa).

The a divalent metal cation site is built by aspartate 9 and histidine 11. 4-CDP-2-C-methyl-D-erythritol 2-phosphate contacts are provided by residues 9 to 11 (DVH) and 35 to 36 (HS). Residue histidine 43 participates in a divalent metal cation binding. Residues 57–59 (DIG), 62–66 (FPDTD), 133–136 (TTTE), phenylalanine 140, and arginine 143 contribute to the 4-CDP-2-C-methyl-D-erythritol 2-phosphate site.

This sequence belongs to the IspF family. In terms of assembly, homotrimer. A divalent metal cation is required as a cofactor.

The enzyme catalyses 4-CDP-2-C-methyl-D-erythritol 2-phosphate = 2-C-methyl-D-erythritol 2,4-cyclic diphosphate + CMP. It functions in the pathway isoprenoid biosynthesis; isopentenyl diphosphate biosynthesis via DXP pathway; isopentenyl diphosphate from 1-deoxy-D-xylulose 5-phosphate: step 4/6. Involved in the biosynthesis of isopentenyl diphosphate (IPP) and dimethylallyl diphosphate (DMAPP), two major building blocks of isoprenoid compounds. Catalyzes the conversion of 4-diphosphocytidyl-2-C-methyl-D-erythritol 2-phosphate (CDP-ME2P) to 2-C-methyl-D-erythritol 2,4-cyclodiphosphate (ME-CPP) with a corresponding release of cytidine 5-monophosphate (CMP). The sequence is that of 2-C-methyl-D-erythritol 2,4-cyclodiphosphate synthase from Histophilus somni (strain 2336) (Haemophilus somnus).